The primary structure comprises 490 residues: Serine palmitoyltransferase 2 (490 aa).

A helical transmembrane segment spans residues 10–30 (VDDVGYLPILFLYIAYAFIIF). Lysine 321 is modified (N6-(pyridoxal phosphate)lysine).

The protein belongs to the class-II pyridoxal-phosphate-dependent aminotransferase family. Forms a heterodimer with sptA. Pyridoxal 5'-phosphate serves as cofactor.

It localises to the endoplasmic reticulum membrane. The catalysed reaction is L-serine + hexadecanoyl-CoA + H(+) = 3-oxosphinganine + CO2 + CoA. The protein operates within lipid metabolism; sphingolipid metabolism. Functionally, catalytic subunit of serine palmitoyltransferase (SPT), which catalyzes the committed step in the synthesis of sphingolipids, the condensation of serine with palmitoyl CoA to form the long chain base 3-ketosphinganine. This Dictyostelium discoideum (Social amoeba) protein is Serine palmitoyltransferase 2 (sptB).